The sequence spans 639 residues: Extracellular metalloproteinase mep (639 aa).

Residues M1–V16 form the signal peptide. Residues C17 to E245 constitute a propeptide that is removed on maturation. N287, N320, N336, and N368 each carry an N-linked (GlcNAc...) asparagine glycan. H429 lines the Zn(2+) pocket. E430 is an active-site residue. H433 lines the Zn(2+) pocket. A glycan (N-linked (GlcNAc...) asparagine) is linked at N509.

The protein belongs to the peptidase M36 family. The cofactor is Zn(2+).

Its subcellular location is the secreted. Secreted metalloproteinase that allows assimilation of proteinaceous substrates. This is Extracellular metalloproteinase mep (mep) from Aspergillus flavus (strain ATCC 200026 / FGSC A1120 / IAM 13836 / NRRL 3357 / JCM 12722 / SRRC 167).